The primary structure comprises 235 residues: Fibrillarin-like rRNA/tRNA 2'-O-methyltransferase (235 aa).

Residues 91–92, 110–111, 137–138, and 157–160 contribute to the S-adenosyl-L-methionine site; these read TT, EF, DA, and DVAQ.

The protein belongs to the methyltransferase superfamily. Fibrillarin family. As to quaternary structure, interacts with nop5. Component of box C/D small ribonucleoprotein (sRNP) particles that contain rpl7ae, FlpA and nop5, plus a guide RNA.

In terms of biological role, involved in pre-rRNA and tRNA processing. Utilizes the methyl donor S-adenosyl-L-methionine to catalyze the site-specific 2'-hydroxyl methylation of ribose moieties in rRNA and tRNA. Site specificity is provided by a guide RNA that base pairs with the substrate. Methylation occurs at a characteristic distance from the sequence involved in base pairing with the guide RNA. This is Fibrillarin-like rRNA/tRNA 2'-O-methyltransferase from Pyrobaculum islandicum (strain DSM 4184 / JCM 9189 / GEO3).